A 192-amino-acid polypeptide reads, in one-letter code: MAALRPGSRALRRLLCRSFSGGGGVRLARERPTDHRDAASSRVSRFCPPRQSCHDWIGPPDKCSNLRPVHFHIPENESPLEQRLRELRQETQEWNQQFWAKQNLSFNKEKEEFIYSRLQAKGAGLRTESGQRATLDAEEMADFYKDFLSKNFQKHMRYNRDWYKRNFAITFFMGKVVLERMWSKLRQKKTSS.

Residues 1–26 constitute a mitochondrion transit peptide; sequence MAALRPGSRALRRLLCRSFSGGGGVR.

This sequence belongs to the COA8 family. In terms of processing, N-terminal mitochondrial targeting sequence is cleaved from the mature protein once in the mitochondrion. Post-translationally, in normal conditions, the cytoplasmic precursor protein is rapidly degraded by the ubiquitination-proteasome system (UPS). Oxidative stress induces protein stabilization and import into mitochondria where it protects COX from degradation. In terms of tissue distribution, expressed in atherosclerotic smooth muscle cells (at protein level). Expressed in aorta, brain, heart, kidney, liver, lung and spleen. Isoform 1 is strongly expressed in Kidney. Isoform 2 is strongly expressed in brain.

It is found in the mitochondrion inner membrane. Functionally, required for cytochrome c complex (COX) IV assembly and function Protects COX assembly from oxidation-induced degradation, COX being the terminal component of the mitochondrial respiratory chain. The sequence is that of Cytochrome c oxidase assembly factor 8 (Coa8) from Mus musculus (Mouse).